Here is a 313-residue protein sequence, read N- to C-terminus: 4-diphosphocytidyl-2-C-methyl-D-erythritol kinase (313 aa).

K10 is a catalytic residue. Residue 95 to 105 (PVTAGLGGGSS) coordinates ATP. D136 is a catalytic residue. The segment at 289-313 (HPRVSPWRSPRSASSRSTRRSSRPT) is disordered. Positions 292–304 (VSPWRSPRSASSR) are enriched in low complexity.

The protein belongs to the GHMP kinase family. IspE subfamily.

The enzyme catalyses 4-CDP-2-C-methyl-D-erythritol + ATP = 4-CDP-2-C-methyl-D-erythritol 2-phosphate + ADP + H(+). It functions in the pathway isoprenoid biosynthesis; isopentenyl diphosphate biosynthesis via DXP pathway; isopentenyl diphosphate from 1-deoxy-D-xylulose 5-phosphate: step 3/6. Functionally, catalyzes the phosphorylation of the position 2 hydroxy group of 4-diphosphocytidyl-2C-methyl-D-erythritol. In Anaeromyxobacter sp. (strain K), this protein is 4-diphosphocytidyl-2-C-methyl-D-erythritol kinase.